Consider the following 430-residue polypeptide: Adenylosuccinate synthetase (430 aa).

GTP contacts are provided by residues Gly-12 to Lys-18 and Gly-40 to Thr-42. Asp-13 functions as the Proton acceptor in the catalytic mechanism. Mg(2+)-binding residues include Asp-13 and Gly-40. Residues Asp-13 to Lys-16, Asn-38 to His-41, Thr-129, Arg-143, Gln-224, Thr-239, and Arg-303 each bind IMP. Catalysis depends on His-41, which acts as the Proton donor. Thr-299 to Arg-305 lines the substrate pocket. Residues Arg-305, Lys-331–Asp-333, and Ser-413–Gly-415 contribute to the GTP site.

Belongs to the adenylosuccinate synthetase family. Homodimer. Mg(2+) is required as a cofactor.

The protein resides in the cytoplasm. The catalysed reaction is IMP + L-aspartate + GTP = N(6)-(1,2-dicarboxyethyl)-AMP + GDP + phosphate + 2 H(+). The protein operates within purine metabolism; AMP biosynthesis via de novo pathway; AMP from IMP: step 1/2. In terms of biological role, plays an important role in the de novo pathway of purine nucleotide biosynthesis. Catalyzes the first committed step in the biosynthesis of AMP from IMP. The polypeptide is Adenylosuccinate synthetase (Ehrlichia chaffeensis (strain ATCC CRL-10679 / Arkansas)).